The primary structure comprises 446 residues: Coiled-coil domain-containing protein 112 (446 aa).

Coiled coils occupy residues 23–116 and 219–400; these read LEEL…RKID and ERKK…NVSR. Disordered stretches follow at residues 247–277 and 394–430; these read NNTP…AVEA and VENN…LLHI. Basic and acidic residues predominate over residues 255 to 268; it reads NKPEDNQKQKEEQR.

It localises to the cytoplasm. Its subcellular location is the cytoskeleton. It is found in the microtubule organizing center. The protein resides in the centrosome. The protein localises to the centriolar satellite. In Macaca fascicularis (Crab-eating macaque), this protein is Coiled-coil domain-containing protein 112 (CCDC112).